The following is a 354-amino-acid chain: uncharacterized protein (354 aa).

9 helical membrane passes run 9–29, 31–51, 76–96, 109–129, 144–164, 185–205, 278–298, 306–326, and 327–347; these read MGKIELHHVFVMLSCIYLIFS, ISINSAVVFLFSSIFFYISFT, NFGIFLMIVGLIAVTSDLIWV, FLNVYFTTLSHLFLVGWAIVV, IIFSILIMLLGYRTNVLVLLI, GILVFVILLGLSILRLYALGV, YGTLAIIPYFGILGIFLGFFY, GIYLGIYGILFAYTLIGIESG, and ILDIDVILYYFFGLILCIYAI.

Its subcellular location is the cell membrane. This is an uncharacterized protein from Methanocaldococcus jannaschii (strain ATCC 43067 / DSM 2661 / JAL-1 / JCM 10045 / NBRC 100440) (Methanococcus jannaschii).